The chain runs to 145 residues: Large-conductance mechanosensitive channel (145 aa).

The next 3 membrane-spanning stretches (helical) occupy residues 14–34, 38–58, and 81–101; these read VMDL…VKSL, LIMP…YFLP, and GSFL…FLMV.

This sequence belongs to the MscL family. Homopentamer.

It localises to the cell inner membrane. Channel that opens in response to stretch forces in the membrane lipid bilayer. May participate in the regulation of osmotic pressure changes within the cell. In Rhizobium leguminosarum bv. trifolii (strain WSM2304), this protein is Large-conductance mechanosensitive channel.